The following is a 547-amino-acid chain: Undecaprenyl phosphate-alpha-4-amino-4-deoxy-L-arabinose arabinosyl transferase (547 aa).

11 helical membrane passes run 1-21, 83-103, 111-131, 174-194, 205-225, 253-273, 286-306, 311-331, 346-366, 378-398, and 408-428; these read MKLT…LPLD, FASA…ALQL, FLAG…TYSV, FLTK…PYVI, FGPL…IAVH, APFW…LGLL, ISPE…FFSV, LLTY…ASAV, AWLN…LALS, GALA…FIQL, and SALC…QSLI.

It belongs to the glycosyltransferase 83 family.

It is found in the cell inner membrane. It catalyses the reaction 4-amino-4-deoxy-alpha-L-arabinopyranosyl di-trans,octa-cis-undecaprenyl phosphate + lipid IVA = lipid IIA + di-trans,octa-cis-undecaprenyl phosphate.. The protein operates within lipopolysaccharide metabolism; 4-amino-4-deoxy-beta-L-arabinose-lipid A biosynthesis. Functionally, catalyzes the transfer of the L-Ara4N moiety of the glycolipid undecaprenyl phosphate-alpha-L-Ara4N to lipid A. The modified arabinose is attached to lipid A and is required for resistance to polymyxin and cationic antimicrobial peptides. This is Undecaprenyl phosphate-alpha-4-amino-4-deoxy-L-arabinose arabinosyl transferase from Aeromonas salmonicida (strain A449).